The chain runs to 257 residues: Dihydroorotate dehydrogenase B (NAD(+)), electron transfer subunit (257 aa).

Positions I2 to L102 constitute an FAD-binding FR-type domain. Residues R53 to S56, I70 to R72, and G77 to T78 each bind FAD. The [2Fe-2S] cluster site is built by C221, C226, C229, and C244.

The protein belongs to the PyrK family. In terms of assembly, heterotetramer of 2 PyrK and 2 PyrD type B subunits. [2Fe-2S] cluster serves as cofactor. FAD is required as a cofactor.

It participates in pyrimidine metabolism; UMP biosynthesis via de novo pathway; orotate from (S)-dihydroorotate (NAD(+) route): step 1/1. In terms of biological role, responsible for channeling the electrons from the oxidation of dihydroorotate from the FMN redox center in the PyrD type B subunit to the ultimate electron acceptor NAD(+). This is Dihydroorotate dehydrogenase B (NAD(+)), electron transfer subunit from Bacillus caldolyticus.